A 983-amino-acid polypeptide reads, in one-letter code: Protein CLASP-3 (983 aa).

Disordered regions lie at residues 356–393 (YPNR…TQKA) and 666–690 (SNNI…QKES). A compositionally biased stretch (low complexity) spans 359–372 (RPGSRTRTSSITST). One copy of the HEAT repeat lies at 918 to 956 (ITPTIIKAYQSTSSTVRKTVVYCLVAMVNRVGEQRMTPH).

The protein belongs to the CLASP family.

The protein localises to the cytoplasm. Its subcellular location is the cytoskeleton. Functionally, microtubule plus-end tracking protein that promotes the stabilization of dynamic microtubules. The chain is Protein CLASP-3 (cls-3) from Caenorhabditis elegans.